A 599-amino-acid polypeptide reads, in one-letter code: MKRCQSSRPTAAVAAVVAAVSMIIVLVSGTAIPSAAAAAAVEHTFVVSQVNMTHLCKEMAFTVVNGQLPGPTIEVTEGDSVTVHVVNKSPYNLTIHWHGVYQLLNCWNDGVPMITQRPIQPNHNFTYRFNVAGQEGTLWWHAHDAFLRGTVHGALIIRPRHGAASYPFPRPHREVPIIIGEWWEKDLPQVDRNMTNGYFDDYSSGSTINGKLGDLFNCSGVLEDGYVLDVEPGKTYLLRIINAALFSEYFLKIAGHRFTVVASDANYLTPYSTDVVVIAPGETLDAIVVADAPPSGRYYIAAQPIQAPPPDTQTPEYATRGTLQYSSNSRNSSAAAMPEMPHQHDTMRSFYFRGNLTAGARLHRHGRRRVPARADESLFVTLGLGSVCRHGGASCKRGGNLKESIVVANVNNVSFHIPAAAATPILEAHYYHRLHAGAGEEEEELAERPPRAYNYTDQALTPFGPEEMRLEATSRAVVTRRFRHGATVDVVFQSTAMLQGDSNPMHLHGHDVFLLAQGIGIYDAARDEGKFNLVNPPRKNTVLVPNLGWAAVRFVADNPGAWLMHCHFEFHLSMGMAAVFIVEDGPTVDTSLPPPPEDF.

The signal sequence occupies residues M1–G29. Plastocyanin-like domains lie at V46–G162 and R173–N328. N-linked (GlcNAc...) asparagine glycosylation is found at N51 and N92. Cu cation is bound by residues H96 and H98. N124 is a glycosylation site (N-linked (GlcNAc...) asparagine). Positions 141 and 143 each coordinate Cu cation. N-linked (GlcNAc...) asparagine glycosylation is found at N193, N217, N331, N355, N412, and N454. A Plastocyanin-like 3 domain is found at E444–P586. The Cu cation site is built by N503, H506, H508, H565, C566, H567, H571, and M576.

Belongs to the multicopper oxidase family. The cofactor is Cu cation.

It is found in the secreted. Its subcellular location is the extracellular space. It localises to the apoplast. It catalyses the reaction 4 hydroquinone + O2 = 4 benzosemiquinone + 2 H2O. Functionally, lignin degradation and detoxification of lignin-derived products. The chain is Laccase-15 (LAC15) from Oryza sativa subsp. japonica (Rice).